The primary structure comprises 544 residues: Cytochrome P450 monooxygenase tenB (544 aa).

Residues 13–33 (LGYYEKVTGILGVVSIILLFW) traverse the membrane as a helical segment. Residues 438–448 (FDPFRFSRASK) show a composition bias toward basic and acidic residues. The tract at residues 438-467 (FDPFRFSRASKDDDDDDDDDGRSTSSHTKD) is disordered. Cys-486 serves as a coordination point for heme.

The protein belongs to the cytochrome P450 family. Heme is required as a cofactor.

The protein localises to the membrane. Its pathway is secondary metabolite biosynthesis. Its function is as follows. Cytochrome P450 monooxygenase; part of the gene cluster that mediates the biosynthesis of tenellin-type 2-pyridones, iron-chelating compounds involved in iron stress tolerance, competition with the natural competitor fungus Metarhizium robertsii and insect hosts infection. TenB catalyzes the selective N-hydroxylation of the 2-pyridone nitrogen of yield tellinin and 15-hydroxytellenin (15-HT), respectively. The pathway begins with the assembly of the polyketide-amino acid backbone by the hybrid PKS-NRPS tenS with the help of the enoyl reductase tenC. These enzymes catalyze the synthesis of the pyrrolidine-2-dione intermediates pretellinin A, 11-hydropretellenin A, 12-hydropretellenin A, 13-hydropretellenin A, 14-hydropretellenin A, 12-oxopretellenin A and prototellinin D. The cytochrome P450 monooxygenase tenA then catalyzes an oxidative ring expansion of pretenellin A and 14-hydropretellenin A to form the 2-pyridone core, leading to pretenellin B and pyridovericin, respectively. The cytochrome P450 monooxygenase tenB is then required for the selective N-hydroxylation of the 2-pyridone nitrogen of yield tellinin and 15-hydroxytellenin (15-HT), respectively. The UDP-glucosyltransferase GT1 and the methyltransferase MT1, located outside the tenS gene cluster, contribute to the stepwise glycosylation and methylation of 15-HT to obtain the glycoside pyridovericin-N-O-(4-O-methyl-beta-D-glucopyranoside) (PMGP). Additional related compounds such as 1-O-methyl-15-HT, (8Z)-1-O-methyl-15-HT, and O-methyltenellin A are also produced but the enzymes involved in their biosynthesis have still to be determined. In Beauveria bassiana (strain ARSEF 2860) (White muscardine disease fungus), this protein is Cytochrome P450 monooxygenase tenB.